The chain runs to 150 residues: Large ribosomal subunit protein uL15 (150 aa).

The segment at 1 to 52 is disordered; the sequence is MITLNTLKDSTRKRKPRKRVGRGIGSKHGKTCGRGEKGAGARSGYKRRLGKE. Residues 11-31 are compositionally biased toward basic residues; it reads TRKRKPRKRVGRGIGSKHGKT.

It belongs to the universal ribosomal protein uL15 family. Part of the 50S ribosomal subunit.

Binds to the 23S rRNA. This is Large ribosomal subunit protein uL15 from Protochlamydia amoebophila (strain UWE25).